The following is a 610-amino-acid chain: Diol dehydratase-reactivating factor large subunit (610 aa).

11–13 (NSS) contributes to the ATP binding site. The Mg(2+) site is built by Thr105, Asp166, and Asp183. ATP-binding positions include 459–462 (EEIK), 557–558 (GS), and Arg591.

This sequence belongs to the DdrA/PduG family. As to quaternary structure, component of the DDR complex, a heterotetramer of DdrA(2)/DdrB(2). The DDR complex interacts with the diol dehydratase complex in the presence of ADP but not ATP. Requires Mg(2+) as cofactor.

The enzyme catalyses ATP + H2O = ADP + phosphate + H(+). Large subunit of the diol dehydratase-reactivating factor (DDR), which reactivates suicidally inhibited adenosylcobalamin-dependent diol dehydratase (DD, pddA, pddB, pddC). DDR acts as a chaperone, reactivating inactivated DD holoenzyme in the presence of ATP, Mg(2+) and free adenosylcobalamin (AdoCbl), by mediating the exchange of the tightly bound damaged cofactor AdoCbl for a free intact one. Reactivation takes place in two steps: ADP-dependent cobalamin release, then ATP-dependent dissociation of the DD apoenzyme-DDR complex. DDR has weak ATPase activity which is required for DD reactivation. This subunit contains the adenosine nucleotide binding site. Activates glycerol-inactivated, O2-inactivated holoenzyme and inactivated enzyme-cyanocobalamin complex. Also reactivates glycerol-inactivated hologlycerol dehydratase, a DD isozyme. The protein is Diol dehydratase-reactivating factor large subunit of Klebsiella michiganensis (strain ATCC 8724 / DSM 4798 / JCM 20051 / NBRC 3318 / NRRL B-199 / KCTC 1686 / BUCSAV 143 / CCM 1901).